The following is a 625-amino-acid chain: MASTLISSLAVVLPLTLLAPSMSMKISRIDVLGYICNNGTVSNEEAYRRSYQINLDAIRGDMRHVKFGTHEHGDPPERMYVLSQCVSDLSSDECSLCWSRATDLLSQCFPATGGWFHLDGCFVRADNYSFYQEPVSHQDTKICASDKEKSAEFKGLVKEVTKSIVEAAPYSRGFSVAKMGIRDLTVYGLGVCWRTLNDELCKLCLADGALSVTSCLPSKEGFALNAGCYLRYSNYTFYNERGLLAMSFTKENLTYIFVISMVGVLAIAAGFWCGKCFYMRTSPKKKIKGTKTKKFHLFGHLRIEKESESICTESHLMSFEYSTLKKATNNFNESCKLGVGGYGEVFKGTLSDGREIAIKRLHVSGKKPRDEIHNEIDVISRCQHKNLVRLLGCCFTNMNSFIVYEFLANTSLDHILFNPEKKKELDWKKRRTIILGTAEGLEYLHETCKIIHRDIKASNILLDLKYKPKISDFGLAKFYPEGGKDIPASSLSPSSIAGTLGYMAPEYISKGRLSNKIDAYSFGVLVLEITSGFRNNKFRSDNSLETLVTQVWKCFASNKMEEMIDKDMGEDTDKQEMKRVMQIGLLCTQESPQLRPTMSKVIQMVSSTDIVLPTPTKPPFLHDSM.

The first 23 residues, 1-23 (MASTLISSLAVVLPLTLLAPSMS), serve as a signal peptide directing secretion. Over 24–252 (MKISRIDVLG…LLAMSFTKEN (229 aa)) the chain is Extracellular. Gnk2-homologous domains are found at residues 29–130 (IDVL…NYSF) and 135–237 (VSHQ…NYTF). Asn-38, Asn-127, Asn-234, and Asn-252 each carry an N-linked (GlcNAc...) asparagine glycan. The chain crosses the membrane as a helical span at residues 253–273 (LTYIFVISMVGVLAIAAGFWC). Topologically, residues 274–625 (GKCFYMRTSP…TKPPFLHDSM (352 aa)) are cytoplasmic. Residues 331–621 (FNESCKLGVG…LPTPTKPPFL (291 aa)) form the Protein kinase domain. Residues 337–345 (LGVGGYGEV) and Lys-359 contribute to the ATP site. A Phosphotyrosine modification is found at Tyr-404. Asp-454 functions as the Proton acceptor in the catalytic mechanism. The residue at position 458 (Ser-458) is a Phosphoserine. Residue Thr-499 is modified to Phosphothreonine. Tyr-507 is modified (phosphotyrosine).

Belongs to the protein kinase superfamily. Ser/Thr protein kinase family. CRK subfamily.

It is found in the membrane. The enzyme catalyses L-seryl-[protein] + ATP = O-phospho-L-seryl-[protein] + ADP + H(+). The catalysed reaction is L-threonyl-[protein] + ATP = O-phospho-L-threonyl-[protein] + ADP + H(+). The polypeptide is Cysteine-rich receptor-like protein kinase 46 (Arabidopsis thaliana (Mouse-ear cress)).